Consider the following 231-residue polypeptide: Orotidine 5'-phosphate decarboxylase (231 aa).

Substrate is bound by residues Asp-11, Lys-33, 60–69, Thr-120, Arg-181, Gln-190, Gly-210, and Arg-211; that span reads DLKFHDIPNT. Lys-62 (proton donor) is an active-site residue.

It belongs to the OMP decarboxylase family. Type 1 subfamily. Homodimer.

It catalyses the reaction orotidine 5'-phosphate + H(+) = UMP + CO2. It participates in pyrimidine metabolism; UMP biosynthesis via de novo pathway; UMP from orotate: step 2/2. Its function is as follows. Catalyzes the decarboxylation of orotidine 5'-monophosphate (OMP) to uridine 5'-monophosphate (UMP). The polypeptide is Orotidine 5'-phosphate decarboxylase (Photobacterium profundum (strain SS9)).